Here is a 214-residue protein sequence, read N- to C-terminus: Vascular endothelial growth factor A (214 aa).

The N-terminal stretch at 1 to 26 (MNFLLSWVHWSLALLLYLHHAKWSQA) is a signal peptide. 3 disulfide bridges follow: cysteine 51–cysteine 93, cysteine 82–cysteine 127, and cysteine 86–cysteine 129. Residue asparagine 100 is glycosylated (N-linked (GlcNAc...) asparagine). The span at 131 to 142 (PKKDRARQEKKS) shows a compositional bias: basic and acidic residues. The interval 131–162 (PKKDRARQEKKSIRGKGKGQKRKRKKSRYKPW) is disordered. A compositionally biased stretch (basic residues) spans 143 to 159 (IRGKGKGQKRKRKKSRY).

It belongs to the PDGF/VEGF growth factor family. As to quaternary structure, homodimer; disulfide-linked. Also found as heterodimer with PGF. Interacts with NRP1. Interacts with BSG. Interacts with CD82; this interaction inhibits VEGFA-mediated signaling pathway.

The protein resides in the secreted. Growth factor active in angiogenesis, vasculogenesis and endothelial cell growth. Induces endothelial cell proliferation, promotes cell migration, inhibits apoptosis and induces permeabilization of blood vessels. Binds to the FLT1/VEGFR1 and KDR/VEGFR2 receptors, heparan sulfate and heparin. Binding to NRP1 receptor initiates a signaling pathway needed for motor neuron axon guidance and cell body migration, including for the caudal migration of facial motor neurons from rhombomere 4 to rhombomere 6 during embryonic development. Also binds the DEAR/FBXW7-AS1 receptor. This Canis lupus familiaris (Dog) protein is Vascular endothelial growth factor A (VEGFA).